The following is a 150-amino-acid chain: Deoxyuridine 5'-triphosphate nucleotidohydrolase (150 aa).

Residues 69-71 (RSG), Asn82, 86-88 (LID), and Met96 contribute to the substrate site.

This sequence belongs to the dUTPase family. Mg(2+) is required as a cofactor.

It carries out the reaction dUTP + H2O = dUMP + diphosphate + H(+). It functions in the pathway pyrimidine metabolism; dUMP biosynthesis; dUMP from dCTP (dUTP route): step 2/2. This enzyme is involved in nucleotide metabolism: it produces dUMP, the immediate precursor of thymidine nucleotides and it decreases the intracellular concentration of dUTP so that uracil cannot be incorporated into DNA. This chain is Deoxyuridine 5'-triphosphate nucleotidohydrolase, found in Alcanivorax borkumensis (strain ATCC 700651 / DSM 11573 / NCIMB 13689 / SK2).